We begin with the raw amino-acid sequence, 149 residues long: HTH-type transcriptional regulator LrpB (149 aa).

One can recognise an HTH asnC-type domain in the interval 3–64 (IDSIDFQILQ…VVDELKMGFS (62 aa)). A DNA-binding region (H-T-H motif) is located at residues 22 to 41 (WKEIGEKIHMTGQAVGNRIK).

Its function is as follows. Negative regulation of glyA transcription and kinB-dependent sporulation. The chain is HTH-type transcriptional regulator LrpB (lrpB) from Bacillus subtilis (strain 168).